The sequence spans 215 residues: LexA repressor (215 aa).

Residues 28 to 48 constitute a DNA-binding region (H-T-H motif); sequence RAEIAAELGFSSPNAAEEHLR. Catalysis depends on for autocatalytic cleavage activity residues Ser-133 and Lys-170.

This sequence belongs to the peptidase S24 family. Homodimer.

It catalyses the reaction Hydrolysis of Ala-|-Gly bond in repressor LexA.. Its function is as follows. Represses a number of genes involved in the response to DNA damage (SOS response), including recA and lexA. In the presence of single-stranded DNA, RecA interacts with LexA causing an autocatalytic cleavage which disrupts the DNA-binding part of LexA, leading to derepression of the SOS regulon and eventually DNA repair. In Burkholderia cenocepacia (strain HI2424), this protein is LexA repressor.